The sequence spans 202 residues: Na(+)-translocating NADH-quinone reductase subunit E (202 aa).

6 helical membrane passes run 11-31 (AVFV…FIAI), 35-55 (VETA…TMPV), 79-99 (LSFL…QILE), 114-134 (GVFL…LFMV), 144-164 (TVYG…LAGI), and 180-200 (LGIT…FSGV).

The protein belongs to the NqrDE/RnfAE family. Composed of six subunits; NqrA, NqrB, NqrC, NqrD, NqrE and NqrF.

The protein localises to the cell inner membrane. The catalysed reaction is a ubiquinone + n Na(+)(in) + NADH + H(+) = a ubiquinol + n Na(+)(out) + NAD(+). Functionally, NQR complex catalyzes the reduction of ubiquinone-1 to ubiquinol by two successive reactions, coupled with the transport of Na(+) ions from the cytoplasm to the periplasm. NqrA to NqrE are probably involved in the second step, the conversion of ubisemiquinone to ubiquinol. This is Na(+)-translocating NADH-quinone reductase subunit E from Ectopseudomonas mendocina (strain ymp) (Pseudomonas mendocina).